We begin with the raw amino-acid sequence, 475 residues long: Sulfate adenylyltransferase subunit 1 (475 aa).

The tr-type G domain occupies Lys24–Glu240. Positions Gly33 to Ser40 are G1. GTP is bound at residue Gly33–Ser40. The G2 stretch occupies residues Gly91 to Asp95. The tract at residues Asp112–Gly115 is G3. GTP contacts are provided by residues Asp112–His116 and Asn167–Asp170. Residues Asn167–Asp170 form a G4 region. Residues Ser204 to Leu206 are G5.

This sequence belongs to the TRAFAC class translation factor GTPase superfamily. Classic translation factor GTPase family. CysN/NodQ subfamily. In terms of assembly, heterodimer composed of CysD, the smaller subunit, and CysN.

The enzyme catalyses sulfate + ATP + H(+) = adenosine 5'-phosphosulfate + diphosphate. The protein operates within sulfur metabolism; hydrogen sulfide biosynthesis; sulfite from sulfate: step 1/3. In terms of biological role, with CysD forms the ATP sulfurylase (ATPS) that catalyzes the adenylation of sulfate producing adenosine 5'-phosphosulfate (APS) and diphosphate, the first enzymatic step in sulfur assimilation pathway. APS synthesis involves the formation of a high-energy phosphoric-sulfuric acid anhydride bond driven by GTP hydrolysis by CysN coupled to ATP hydrolysis by CysD. In Aeromonas hydrophila subsp. hydrophila (strain ATCC 7966 / DSM 30187 / BCRC 13018 / CCUG 14551 / JCM 1027 / KCTC 2358 / NCIMB 9240 / NCTC 8049), this protein is Sulfate adenylyltransferase subunit 1.